A 206-amino-acid polypeptide reads, in one-letter code: Imidazoleglycerol-phosphate dehydratase (206 aa).

It belongs to the imidazoleglycerol-phosphate dehydratase family.

The protein resides in the cytoplasm. It catalyses the reaction D-erythro-1-(imidazol-4-yl)glycerol 3-phosphate = 3-(imidazol-4-yl)-2-oxopropyl phosphate + H2O. The protein operates within amino-acid biosynthesis; L-histidine biosynthesis; L-histidine from 5-phospho-alpha-D-ribose 1-diphosphate: step 6/9. The chain is Imidazoleglycerol-phosphate dehydratase from Cutibacterium acnes (strain DSM 16379 / KPA171202) (Propionibacterium acnes).